The sequence spans 282 residues: 2-dehydro-3-deoxyphosphooctonate aldolase (282 aa).

It belongs to the KdsA family.

It localises to the cytoplasm. It carries out the reaction D-arabinose 5-phosphate + phosphoenolpyruvate + H2O = 3-deoxy-alpha-D-manno-2-octulosonate-8-phosphate + phosphate. The protein operates within carbohydrate biosynthesis; 3-deoxy-D-manno-octulosonate biosynthesis; 3-deoxy-D-manno-octulosonate from D-ribulose 5-phosphate: step 2/3. Its pathway is bacterial outer membrane biogenesis; lipopolysaccharide biosynthesis. This chain is 2-dehydro-3-deoxyphosphooctonate aldolase, found in Bradyrhizobium diazoefficiens (strain JCM 10833 / BCRC 13528 / IAM 13628 / NBRC 14792 / USDA 110).